The primary structure comprises 468 residues: MKPVMALVGRANVGKSTLFNRLTRSRDALVADFAGLTRDRHYGNGKQGRHEYIVIDTGGFEPDVASGIYREMARQTQQAIAEADVVVFVVDVRAGVTAQDHDIAHYLRRAGKPCVLAANKAEGMQQDQGGKWAEFYELGLGTVHPVSAAHGQGIRSLVEMALEPLSPPDDGADAAARDLPDADGVDGVDGVDGADGRIIRLAVAGRPNVGKSTLINTWLGEERLVAFDTPGTTRDAITVPFERNGQRFELVDTAGLRRKGKVFAAVEKFSVVKTLQAIESAHVVLLLLDASQGVTEQDAHIAGYILESGRAVVLAVNKWDATDDYQRQLLERSIETRLAFLKFASLHRISAKKRQGLGPLWTAIVQAHKAATCKMSTPVLTRLLLEAVQFQSPQRQGLFRPKMRYAHQGGMNPPVIVIHGNGLEHVTDTYKRFLEGRFRKEFDLVGTPLRIELKTSHNPYVDEGRGGR.

EngA-type G domains follow at residues 3–169 and 199–372; these read PVMA…SPPD and IRLA…KAAT. GTP is bound by residues 9–16, 56–60, 119–122, 205–212, 252–256, and 317–320; these read GRANVGKS, DTGGF, NKAE, GRPNVGKS, DTAGL, and NKWD. One can recognise a KH-like domain in the interval 373–457; it reads CKMSTPVLTR…PLRIELKTSH (85 aa).

Belongs to the TRAFAC class TrmE-Era-EngA-EngB-Septin-like GTPase superfamily. EngA (Der) GTPase family. Associates with the 50S ribosomal subunit.

In terms of biological role, GTPase that plays an essential role in the late steps of ribosome biogenesis. This chain is GTPase Der, found in Verminephrobacter eiseniae (strain EF01-2).